The chain runs to 132 residues: Small ribosomal subunit protein uS8 (132 aa).

It belongs to the universal ribosomal protein uS8 family. In terms of assembly, part of the 30S ribosomal subunit. Contacts proteins S5 and S12.

In terms of biological role, one of the primary rRNA binding proteins, it binds directly to 16S rRNA central domain where it helps coordinate assembly of the platform of the 30S subunit. This is Small ribosomal subunit protein uS8 from Alkaliphilus oremlandii (strain OhILAs) (Clostridium oremlandii (strain OhILAs)).